A 127-amino-acid polypeptide reads, in one-letter code: Probable soluble cytochrome b562 1 (127 aa).

A signal peptide spans 1 to 21 (MRKIPIIAGVFSLLITSCTFA). Heme b contacts are provided by methionine 28 and histidine 123.

It belongs to the cytochrome b562 family. Heme b serves as cofactor.

It is found in the periplasm. Functionally, electron-transport protein of unknown function. The sequence is that of Probable soluble cytochrome b562 1 (cybC1) from Yersinia pestis.